A 188-amino-acid chain; its full sequence is Elongation factor P-like protein (188 aa).

It belongs to the elongation factor P family.

This is Elongation factor P-like protein from Saccharophagus degradans (strain 2-40 / ATCC 43961 / DSM 17024).